The sequence spans 213 residues: LexA repressor 2 (213 aa).

A DNA-binding region (H-T-H motif) is located at residues 27 to 47; sequence QTEIARAFGFKGVRAAQYHLE. Catalysis depends on for autocatalytic cleavage activity residues S133 and K170.

It belongs to the peptidase S24 family. As to quaternary structure, homodimer.

It catalyses the reaction Hydrolysis of Ala-|-Gly bond in repressor LexA.. In terms of biological role, represses a number of genes involved in the response to DNA damage (SOS response), including recA and lexA. In the presence of single-stranded DNA, RecA interacts with LexA causing an autocatalytic cleavage which disrupts the DNA-binding part of LexA, leading to derepression of the SOS regulon and eventually DNA repair. In Xanthomonas oryzae pv. oryzae (strain KACC10331 / KXO85), this protein is LexA repressor 2.